We begin with the raw amino-acid sequence, 332 residues long: Pyrroline-5-carboxylate reductase (332 aa).

The protein belongs to the pyrroline-5-carboxylate reductase family.

The catalysed reaction is L-proline + NADP(+) = (S)-1-pyrroline-5-carboxylate + NADPH + 2 H(+). The enzyme catalyses L-proline + NAD(+) = (S)-1-pyrroline-5-carboxylate + NADH + 2 H(+). It functions in the pathway amino-acid biosynthesis; L-proline biosynthesis; L-proline from L-glutamate 5-semialdehyde: step 1/1. The sequence is that of Pyrroline-5-carboxylate reductase (pro-1) from Neurospora crassa (strain ATCC 24698 / 74-OR23-1A / CBS 708.71 / DSM 1257 / FGSC 987).